The sequence spans 402 residues: 4-hydroxy-3-methylbut-2-enyl diphosphate reductase (402 aa).

Cysteine 66 serves as a coordination point for [4Fe-4S] cluster. Histidine 96 lines the (2E)-4-hydroxy-3-methylbut-2-enyl diphosphate pocket. Histidine 96 is a binding site for dimethylallyl diphosphate. Histidine 96 lines the isopentenyl diphosphate pocket. Cysteine 157 is a binding site for [4Fe-4S] cluster. (2E)-4-hydroxy-3-methylbut-2-enyl diphosphate is bound at residue histidine 185. Dimethylallyl diphosphate is bound at residue histidine 185. Residue histidine 185 coordinates isopentenyl diphosphate. The active-site Proton donor is glutamate 187. Threonine 250 lines the (2E)-4-hydroxy-3-methylbut-2-enyl diphosphate pocket. Cysteine 288 is a [4Fe-4S] cluster binding site. (2E)-4-hydroxy-3-methylbut-2-enyl diphosphate-binding residues include serine 317, serine 318, asparagine 319, and serine 379. The dimethylallyl diphosphate site is built by serine 317, serine 318, asparagine 319, and serine 379. Positions 317, 318, 319, and 379 each coordinate isopentenyl diphosphate.

It belongs to the IspH family. Requires [4Fe-4S] cluster as cofactor.

It carries out the reaction isopentenyl diphosphate + 2 oxidized [2Fe-2S]-[ferredoxin] + H2O = (2E)-4-hydroxy-3-methylbut-2-enyl diphosphate + 2 reduced [2Fe-2S]-[ferredoxin] + 2 H(+). The enzyme catalyses dimethylallyl diphosphate + 2 oxidized [2Fe-2S]-[ferredoxin] + H2O = (2E)-4-hydroxy-3-methylbut-2-enyl diphosphate + 2 reduced [2Fe-2S]-[ferredoxin] + 2 H(+). It functions in the pathway isoprenoid biosynthesis; dimethylallyl diphosphate biosynthesis; dimethylallyl diphosphate from (2E)-4-hydroxy-3-methylbutenyl diphosphate: step 1/1. The protein operates within isoprenoid biosynthesis; isopentenyl diphosphate biosynthesis via DXP pathway; isopentenyl diphosphate from 1-deoxy-D-xylulose 5-phosphate: step 6/6. Functionally, catalyzes the conversion of 1-hydroxy-2-methyl-2-(E)-butenyl 4-diphosphate (HMBPP) into a mixture of isopentenyl diphosphate (IPP) and dimethylallyl diphosphate (DMAPP). Acts in the terminal step of the DOXP/MEP pathway for isoprenoid precursor biosynthesis. This is 4-hydroxy-3-methylbut-2-enyl diphosphate reductase from Crocosphaera subtropica (strain ATCC 51142 / BH68) (Cyanothece sp. (strain ATCC 51142)).